A 186-amino-acid chain; its full sequence is Superoxide dismutase [Cu-Zn] (186 aa).

The signal sequence occupies residues 1 to 20; sequence MKKTVLALMFSCGMVASAFA. Residues His-79, His-81, and His-104 each contribute to the Cu cation site. Cysteines 86 and 182 form a disulfide. Zn(2+) is bound by residues His-104, His-113, His-122, and Asp-125. His-160 contributes to the Cu cation binding site.

It belongs to the Cu-Zn superoxide dismutase family. In terms of assembly, homodimer. Requires Cu cation as cofactor. Zn(2+) serves as cofactor.

Its subcellular location is the periplasm. It catalyses the reaction 2 superoxide + 2 H(+) = H2O2 + O2. Destroys radicals which are normally produced within the cells and which are toxic to biological systems. The chain is Superoxide dismutase [Cu-Zn] (sodC) from Pasteurella multocida (strain Pm70).